The sequence spans 775 residues: E3 ubiquitin-protein ligase ICP0 (775 aa).

Positions 1–112 (MEPRPGASTR…PPREDGGSDE (112 aa)) are disordered. 2 stretches are compositionally biased toward basic and acidic residues: residues 10–21 (RRPEGRPQREPA) and 45–57 (VGGR…HDDD). A compositionally biased stretch (acidic residues) spans 58-69 (SASEADSTDTEL). Thr-67 bears the Phosphothreonine; by host; by CK1 mark. The RING-type zinc finger occupies 116-157 (CAVCTDEIAPHLRCDTFPCMHRFCIPCMKTWMQLRNTCPLCN). The tract at residues 221–636 (RALSPTHPEP…HAETSGAVPA (416 aa)) is disordered. Over residues 231–243 (TTDEDDDDLDDAD) the composition is skewed to acidic residues. Low complexity predominate over residues 258–284 (RRGAAAPPVTGGASHAAPQPAAARTAP). The span at 293–302 (GSSNTNTTTN) shows a compositional bias: polar residues. A compositionally biased stretch (low complexity) spans 310-321 (RQSRAAAPRGAS). Gly residues predominate over residues 322-331 (GPSGGVGVGV). Residues 369–390 (PASPHRPPAAPMPGSAPRPGPP) are compositionally biased toward pro residues. Over residues 391-409 (ASAAASGPARPRAAVAPCV) the composition is skewed to low complexity. Over residues 410 to 421 (RAPPPGPGPRAP) the composition is skewed to pro residues. Over residues 422 to 431 (APGAEPAARP) the composition is skewed to low complexity. Over residues 439–453 (QSHSSLAQAANQEQS) the composition is skewed to polar residues. The segment covering 464–476 (GSGGPGVEGGHGP) has biased composition (gly residues). A compositionally biased stretch (low complexity) spans 477–493 (SRGAAPSGAAPLPSAAS). The segment covering 509 to 519 (GQENPSPQSTR) has biased composition (polar residues). A compositionally biased stretch (gly residues) spans 539 to 549 (GPGGRGQGGPG). The span at 550 to 592 (TPLTSSAASASSSSASSSSAPTPAGAASSAAGAASSSASASSG) shows a compositional bias: low complexity. A compositionally biased stretch (basic residues) spans 617–626 (GPRKCARKTR).

It belongs to the simplexviruses ICp0 family. As to quaternary structure, interacts directly with human RCOR1/CoREST protein, leading to the disruption of the human BHC corepressor complex. Interacts with human CENPA, leading to its degradation. Interacts with human USP7; this interaction modulates ICP0 stability. Interacts with human CDC34. Interacts (when phosphorylated) with human RNF8 (via FHA domain). Interacts with human TRIM27. Interacts with human ZBP1. Interacts with host MORC3; this interaction promotes the degradation of host MORC3. Post-translationally, phosphorylated at Thr-67, leading to promote interaction with host RNF8. Phosphorylated by host CHEK2; leading to increased SUMO-targeted ubiquitin ligase activity of ICP0. In terms of processing, auto-ubiquitinated. Deubiquitinated by host USP7; leading to stabilize it.

It is found in the host cytoplasm. It localises to the host nucleus. It catalyses the reaction S-ubiquitinyl-[E2 ubiquitin-conjugating enzyme]-L-cysteine + [acceptor protein]-L-lysine = [E2 ubiquitin-conjugating enzyme]-L-cysteine + N(6)-ubiquitinyl-[acceptor protein]-L-lysine.. Functionally, SUMO-targeted ubiquitin ligase that plays an essential role in nuclear antiviral defense evasion triggered by dsDNA viruses. Acts during the initial stages of lytic infection and the reactivation of latent viral genome. Prevents the antiviral effect of nuclear bodies by degrading host PML, SP100 and MORC3. Prevents antiviral response to viral DNA induced by IFI16 by degrading it. Additionally, inhibits host IRF3 nuclear signaling to prevent interferon production by the infected cells. Interestingly, the E3 ubiquitin ligase activity associated with the RING finger domain does not seem to be directly required to inhibit the activation of IRF3 but instead plays a critical role in modulating the cellular localization of ICP0. Upon reactivation of latent genome, suppresses the silencing of viral DNA by dissociating either HDAC1 or HDAC2 from the HDAC-RCOR1-REST-KDM1A complex localized at the ND10 structures and causes their dispersal. Two cellular histone ubiquitin ligases RNF8 and RNF168 are also targeted by ICP0 for degradation, leading to a loss of ubiquitinated forms of H2A, a relief of transcriptional repression, and the activation of latent viral genomes. Enhances the localization of host CCND3 to ND10 bodies that serve as precursors of replication compartments to enable efficient viral replication. Like many RING-finger E3 ubiquitin ligases, ICP0 can induce its own ubiquitination, an activity that promotes its instability due to its targeting to the 26S proteasome for degradation. ICP0 restricts this process by recruiting the cellular ubiquitin-specific protease USP7 that cleaves the anchored ubiquitin chains from ICP0, thereby promoting its stabilization. This chain is E3 ubiquitin-protein ligase ICP0 (ICP0), found in Homo sapiens (Human).